The following is a 493-amino-acid chain: Glutamyl-tRNA(Gln) amidotransferase subunit A (493 aa).

Residues Lys-79 and Ser-159 each act as charge relay system in the active site. The Acyl-ester intermediate role is filled by Ser-183.

Belongs to the amidase family. GatA subfamily. As to quaternary structure, heterotrimer of A, B and C subunits.

The catalysed reaction is L-glutamyl-tRNA(Gln) + L-glutamine + ATP + H2O = L-glutaminyl-tRNA(Gln) + L-glutamate + ADP + phosphate + H(+). Functionally, allows the formation of correctly charged Gln-tRNA(Gln) through the transamidation of misacylated Glu-tRNA(Gln) in organisms which lack glutaminyl-tRNA synthetase. The reaction takes place in the presence of glutamine and ATP through an activated gamma-phospho-Glu-tRNA(Gln). This Brucella suis biovar 1 (strain 1330) protein is Glutamyl-tRNA(Gln) amidotransferase subunit A.